Here is a 300-residue protein sequence, read N- to C-terminus: uncharacterized protein (300 aa).

The signal sequence occupies residues 1–20 (MRLLISCILILSILVNFISG). The Extracellular portion of the chain corresponds to 21–279 (HAVLVAPTPF…PCSIYGDGNG (259 aa)). N56, N217, and N278 each carry an N-linked (GlcNAc...) asparagine glycan. A helical transmembrane segment spans residues 280–300 (SNLIIIPTLLIISILSLILMF).

It is found in the membrane. This is an uncharacterized protein from Dictyostelium discoideum (Social amoeba).